A 218-amino-acid polypeptide reads, in one-letter code: Small ribosomal subunit protein mS34 (218 aa).

A disordered region spans residues 178–218 (RQKNGDPSTEEPMLSLERIRTDPWDYPENQEAKKKTKGTAV).

It belongs to the mitochondrion-specific ribosomal protein mS34 family. Component of the mitochondrial ribosome small subunit (28S) which comprises a 12S rRNA and about 30 distinct proteins.

The protein localises to the mitochondrion. Its function is as follows. Required for mitochondrial translation, plays a role in maintaining the stability of the small ribosomal subunit and the 12S rRNA that are required for mitoribosome formation. The chain is Small ribosomal subunit protein mS34 from Bos taurus (Bovine).